The primary structure comprises 385 residues: Methionyl-tRNA formyltransferase, mitochondrial (385 aa).

The protein belongs to the Fmt family.

The protein localises to the mitochondrion. It catalyses the reaction L-methionyl-tRNA(fMet) + (6R)-10-formyltetrahydrofolate = N-formyl-L-methionyl-tRNA(fMet) + (6S)-5,6,7,8-tetrahydrofolate + H(+). Methionyl-tRNA formyltransferase that formylates methionyl-tRNA in mitochondria and is crucial for translation initiation. The protein is Methionyl-tRNA formyltransferase, mitochondrial (Mtfmt) of Rattus norvegicus (Rat).